Consider the following 90-residue polypeptide: UPF0297 protein OEOE_1166 (90 aa).

The protein belongs to the UPF0297 family.

In Oenococcus oeni (strain ATCC BAA-331 / PSU-1), this protein is UPF0297 protein OEOE_1166.